Reading from the N-terminus, the 411-residue chain is Arginine biosynthesis bifunctional protein ArgJ (411 aa).

Substrate-binding residues include Thr160, Lys186, Thr197, Glu283, Asn406, and Thr411. The active-site Nucleophile is Thr197.

It belongs to the ArgJ family. In terms of assembly, heterotetramer of two alpha and two beta chains.

It is found in the cytoplasm. The enzyme catalyses N(2)-acetyl-L-ornithine + L-glutamate = N-acetyl-L-glutamate + L-ornithine. It catalyses the reaction L-glutamate + acetyl-CoA = N-acetyl-L-glutamate + CoA + H(+). It participates in amino-acid biosynthesis; L-arginine biosynthesis; L-ornithine and N-acetyl-L-glutamate from L-glutamate and N(2)-acetyl-L-ornithine (cyclic): step 1/1. The protein operates within amino-acid biosynthesis; L-arginine biosynthesis; N(2)-acetyl-L-ornithine from L-glutamate: step 1/4. Its activity is regulated as follows. Feedback inhibition by L-ornithine. Its function is as follows. Catalyzes two activities which are involved in the cyclic version of arginine biosynthesis: the synthesis of N-acetylglutamate from glutamate and acetyl-CoA as the acetyl donor, and of ornithine by transacetylation between N(2)-acetylornithine and glutamate. In Halalkalibacterium halodurans (strain ATCC BAA-125 / DSM 18197 / FERM 7344 / JCM 9153 / C-125) (Bacillus halodurans), this protein is Arginine biosynthesis bifunctional protein ArgJ.